Consider the following 1176-residue polypeptide: 3-hydroxy-3-methylglutaryl-coenzyme A reductase (1176 aa).

Residues Met1 to Pro34 lie on the Cytoplasmic side of the membrane. The helical transmembrane segment at Ile35–Leu55 threads the bilayer. Topologically, residues Ala56–Asn299 are lumenal. N-linked (GlcNAc...) asparagine glycosylation is found at Asn224 and Asn238. Residues Ile300–Tyr320 traverse the membrane as a helical segment. One can recognise an SSD domain in the interval Asp301–Leu465. Residues Val321–Tyr330 lie on the Cytoplasmic side of the membrane. Residues Thr331 to Val351 traverse the membrane as a helical segment. Residues Arg352–Gly355 are Lumenal-facing. The chain crosses the membrane as a helical span at residues Val356 to Phe376. The Cytoplasmic segment spans residues Glu377–Glu422. A helical membrane pass occupies residues Ile423–Leu443. Position 444 (Ser444) is a topological domain, lumenal. Residues Ala445–Leu465 form a helical membrane-spanning segment. Topologically, residues Lys466–Arg524 are cytoplasmic. Residues Val525–Phe545 form a helical membrane-spanning segment. Residues Gln546–Pro622 lie on the Lumenal side of the membrane. Asn553 and Asn596 each carry an N-linked (GlcNAc...) asparagine glycan. A helical transmembrane segment spans residues Val623 to Phe643. The Cytoplasmic portion of the chain corresponds to Asn644–Ser1176. A disordered region spans residues Pro699 to Ser724. Positions Asn700–His721 are enriched in basic residues. The active-site Charge relay system is Glu841. Position 847–853 (Ser847–Lys853) interacts with CoA. NADP(+) contacts are provided by residues Ser907–Phe909 and Asp934–Ser942. Lys972 (charge relay system) is an active-site residue. Val1001–Lys1003 contacts CoA. The active-site Charge relay system is Asp1048. Residue Ala1145–His1146 participates in CoA binding. His1146 functions as the Proton donor in the catalytic mechanism. An NADP(+)-binding site is contributed by Asn1150–Arg1151. Residues Thr1153–Ser1176 form a disordered region.

Belongs to the HMG-CoA reductase family.

It localises to the endoplasmic reticulum membrane. It carries out the reaction (R)-mevalonate + 2 NADP(+) + CoA = (3S)-3-hydroxy-3-methylglutaryl-CoA + 2 NADPH + 2 H(+). It participates in metabolic intermediate biosynthesis; (R)-mevalonate biosynthesis; (R)-mevalonate from acetyl-CoA: step 3/3. HMG-CoA reductase; part of the first module of ergosterol biosynthesis pathway that includes the early steps of the pathway, conserved across all eukaryotes, and which results in the formation of mevalonate from acetyl-coenzyme A (acetyl-CoA). In this module, the cytosolic acetyl-CoA acetyltransferase catalyzes the formation of acetoacetyl-CoA. The hydroxymethylglutaryl-CoA synthase then condenses acetyl-CoA with acetoacetyl-CoA to form HMG-CoA. The rate-limiting step of the early module is the reduction to mevalonate by the 3-hydroxy-3-methylglutaryl-coenzyme A (HMG-CoA) reductase hmgA. The protein is 3-hydroxy-3-methylglutaryl-coenzyme A reductase of Phycomyces blakesleeanus (strain ATCC 8743b / DSM 1359 / FGSC 10004 / NBRC 33097 / NRRL 1555).